The sequence spans 1068 residues: Carbamoyl phosphate synthase large chain (1068 aa).

The carboxyphosphate synthetic domain stretch occupies residues 1-401 (MPLNKDIKKV…AFLKGTRSLE (401 aa)). The ATP site is built by Arg-129, Arg-169, Gly-175, Gly-176, Lys-208, Val-210, Glu-215, Gly-241, Ile-242, His-243, Gln-284, and Glu-298. Positions 133-327 (RNVMSRINEP…IAKVASKIAL (195 aa)) constitute an ATP-grasp 1 domain. Gln-284, Glu-298, and Asn-300 together coordinate Mg(2+). Residues Gln-284, Glu-298, and Asn-300 each coordinate Mn(2+). The tract at residues 402–549 (IGKYSLEHKK…YSTYDVYDEV (148 aa)) is oligomerization domain. The carbamoyl phosphate synthetic domain stretch occupies residues 550–932 (EVSKNKKVIV…ALYKGFIGAN (383 aa)). The ATP-grasp 2 domain occupies 674-864 (DELLEKLKIA…IVDIATRVML (191 aa)). ATP-binding residues include Arg-710, Lys-749, Leu-751, Glu-755, Gly-780, Val-781, His-782, Ser-783, Gln-823, and Glu-835. Mg(2+) is bound by residues Gln-823, Glu-835, and Asn-837. Residues Gln-823, Glu-835, and Asn-837 each contribute to the Mn(2+) site. In terms of domain architecture, MGS-like spans 933 to 1068 (ISIKKEKGTV…ETLYIFDLSN (136 aa)). The segment at 933 to 1068 (ISIKKEKGTV…ETLYIFDLSN (136 aa)) is allosteric domain.

The protein belongs to the CarB family. As to quaternary structure, composed of two chains; the small (or glutamine) chain promotes the hydrolysis of glutamine to ammonia, which is used by the large (or ammonia) chain to synthesize carbamoyl phosphate. Tetramer of heterodimers (alpha,beta)4. Mg(2+) is required as a cofactor. The cofactor is Mn(2+).

The enzyme catalyses hydrogencarbonate + L-glutamine + 2 ATP + H2O = carbamoyl phosphate + L-glutamate + 2 ADP + phosphate + 2 H(+). It catalyses the reaction hydrogencarbonate + NH4(+) + 2 ATP = carbamoyl phosphate + 2 ADP + phosphate + 2 H(+). The protein operates within amino-acid biosynthesis; L-arginine biosynthesis; carbamoyl phosphate from bicarbonate: step 1/1. It participates in pyrimidine metabolism; UMP biosynthesis via de novo pathway; (S)-dihydroorotate from bicarbonate: step 1/3. Its function is as follows. Large subunit of the glutamine-dependent carbamoyl phosphate synthetase (CPSase). CPSase catalyzes the formation of carbamoyl phosphate from the ammonia moiety of glutamine, carbonate, and phosphate donated by ATP, constituting the first step of 2 biosynthetic pathways, one leading to arginine and/or urea and the other to pyrimidine nucleotides. The large subunit (synthetase) binds the substrates ammonia (free or transferred from glutamine from the small subunit), hydrogencarbonate and ATP and carries out an ATP-coupled ligase reaction, activating hydrogencarbonate by forming carboxy phosphate which reacts with ammonia to form carbamoyl phosphate. The polypeptide is Carbamoyl phosphate synthase large chain (Clostridium botulinum (strain Langeland / NCTC 10281 / Type F)).